We begin with the raw amino-acid sequence, 156 residues long: MPRRARKFKRAVAPDSRYNSLMLSNFINKLMMHGQKATAQRIVYDAIDIMGKQENKEGLAVFEQGLKNATPFIEVKPRRVGGATYQVPIEVRPDRAQTMAMRWIIKAARKRTGKSMAERLAAEMLEASREQGAAVKKREETHKMAEANRAFVHYRW.

The protein belongs to the universal ribosomal protein uS7 family. As to quaternary structure, part of the 30S ribosomal subunit. Contacts proteins S9 and S11.

Its function is as follows. One of the primary rRNA binding proteins, it binds directly to 16S rRNA where it nucleates assembly of the head domain of the 30S subunit. Is located at the subunit interface close to the decoding center, probably blocks exit of the E-site tRNA. The protein is Small ribosomal subunit protein uS7 of Dehalococcoides mccartyi (strain ATCC BAA-2266 / KCTC 15142 / 195) (Dehalococcoides ethenogenes (strain 195)).